The primary structure comprises 207 residues: Pyridoxine/pyridoxamine 5'-phosphate oxidase (207 aa).

FMN-binding positions include 53 to 58, 68 to 69, Lys75, and Gln97; these read RMVLLK and YT. Lys58 contributes to the substrate binding site. Tyr115, Arg119, and Ser123 together coordinate substrate. FMN is bound by residues 132 to 133 and Trp177; that span reads QS. Substrate is bound at residue 183–185; it reads RLH. Arg187 contacts FMN.

This sequence belongs to the pyridoxamine 5'-phosphate oxidase family. As to quaternary structure, homodimer. FMN is required as a cofactor.

It carries out the reaction pyridoxamine 5'-phosphate + O2 + H2O = pyridoxal 5'-phosphate + H2O2 + NH4(+). It catalyses the reaction pyridoxine 5'-phosphate + O2 = pyridoxal 5'-phosphate + H2O2. The protein operates within cofactor metabolism; pyridoxal 5'-phosphate salvage; pyridoxal 5'-phosphate from pyridoxamine 5'-phosphate: step 1/1. It participates in cofactor metabolism; pyridoxal 5'-phosphate salvage; pyridoxal 5'-phosphate from pyridoxine 5'-phosphate: step 1/1. Its function is as follows. Catalyzes the oxidation of either pyridoxine 5'-phosphate (PNP) or pyridoxamine 5'-phosphate (PMP) into pyridoxal 5'-phosphate (PLP). This chain is Pyridoxine/pyridoxamine 5'-phosphate oxidase, found in Bartonella henselae (strain ATCC 49882 / DSM 28221 / CCUG 30454 / Houston 1) (Rochalimaea henselae).